We begin with the raw amino-acid sequence, 467 residues long: ATP synthase subunit beta, sodium ion specific (467 aa).

151 to 158 (GGAGVGKT) is a binding site for ATP.

It belongs to the ATPase alpha/beta chains family. In terms of assembly, F-type ATPases have 2 components, CF(1) - the catalytic core - and CF(0) - the membrane proton channel. CF(1) has five subunits: alpha(3), beta(3), gamma(1), delta(1), epsilon(1). CF(0) has three main subunits: a, b and c.

The protein resides in the cell membrane. The catalysed reaction is 4 Na(+)(in) + ATP + H2O = 4 Na(+)(out) + ADP + phosphate + H(+). In terms of biological role, produces ATP from ADP in the presence of a sodium ion gradient across the membrane. The beta chain is the catalytic subunit. The chain is ATP synthase subunit beta, sodium ion specific from Propionigenium modestum.